The chain runs to 361 residues: Chorismate synthase (361 aa).

NADP(+)-binding residues include R48 and R54. Residues 125 to 127, 238 to 239, G278, 293 to 297, and R319 contribute to the FMN site; these read RSS, NA, and KPTSS.

It belongs to the chorismate synthase family. In terms of assembly, homotetramer. Requires FMNH2 as cofactor.

The enzyme catalyses 5-O-(1-carboxyvinyl)-3-phosphoshikimate = chorismate + phosphate. It participates in metabolic intermediate biosynthesis; chorismate biosynthesis; chorismate from D-erythrose 4-phosphate and phosphoenolpyruvate: step 7/7. Catalyzes the anti-1,4-elimination of the C-3 phosphate and the C-6 proR hydrogen from 5-enolpyruvylshikimate-3-phosphate (EPSP) to yield chorismate, which is the branch point compound that serves as the starting substrate for the three terminal pathways of aromatic amino acid biosynthesis. This reaction introduces a second double bond into the aromatic ring system. The sequence is that of Chorismate synthase from Enterobacter sp. (strain 638).